The following is a 290-amino-acid chain: MCDKSKTVLDYTIEFLDKYIPEWFETGNKCPLFIFFSGPQGSGKSFTSIQIYNHLMEKYGGEKSIGYASIDDFYLTHEDQLKLNEQFKNNKLLQGRGLPGTHDMKLLQEVLNTIFNNNEHPDQDTVVLPKYDKSQFKGEGDRCPTGQKIKLPVDIFILEGWFLGFNPILQGIENNDLLTGDMVDVNAKLFFYSDLLWRNPEIKSLGIVFTTDNINNVYGWRLQQEHELISKVGKGMTDEQVHAFVDRYMPSYKLYLNDFVRSESLGSIATLTLGIDSNRNVYSTKTRCIE.

38 to 45 contributes to the ATP binding site; that stretch reads GPQGSGKS.

It belongs to the GLYK kinase family.

The protein resides in the cytoplasm. The protein localises to the nucleus. Its function is as follows. ATP-dependent kinase whose specificity is not yet known. The polypeptide is Probable ATP-dependent kinase TDA10 (TDA10) (Saccharomyces cerevisiae (strain ATCC 204508 / S288c) (Baker's yeast)).